The sequence spans 352 residues: NAD(P)H pyrophosphatase NUDT13, mitochondrial (352 aa).

The transit peptide at 1–20 (MSLYCRTFFRRKSFGCYRLL) directs the protein to the mitochondrion. In terms of domain architecture, Nudix hydrolase spans 196 to 323 (PQMAPVVITL…SLALQPSEAS (128 aa)). A Nudix box motif is present at residues 216 to 240 (RQSSFPKGLYSALAGFCDIGESVEE).

Belongs to the Nudix hydrolase family. Requires Mg(2+) as cofactor. The cofactor is Mn(2+).

It is found in the mitochondrion. The catalysed reaction is NADH + H2O = reduced beta-nicotinamide D-ribonucleotide + AMP + 2 H(+). It carries out the reaction NAD(+) + H2O = beta-nicotinamide D-ribonucleotide + AMP + 2 H(+). The enzyme catalyses NADPH + H2O = reduced beta-nicotinamide D-ribonucleotide + adenosine 2',5'-bisphosphate + 2 H(+). NAD(P)H pyrophosphatase that hydrolyzes NADH into NMNH and AMP, and NADPH into NMNH and 2',5'-ADP. Has a marked preference for the reduced pyridine nucleotides. Does not show activity toward NAD-capped RNAs; the NAD-cap is an atypical cap present at the 5'-end of some RNAs. The sequence is that of NAD(P)H pyrophosphatase NUDT13, mitochondrial from Mus musculus (Mouse).